Consider the following 234-residue polypeptide: Large ribosomal subunit protein uL1 (234 aa).

It belongs to the universal ribosomal protein uL1 family. As to quaternary structure, part of the 50S ribosomal subunit.

Its function is as follows. Binds directly to 23S rRNA. The L1 stalk is quite mobile in the ribosome, and is involved in E site tRNA release. Functionally, protein L1 is also a translational repressor protein, it controls the translation of the L11 operon by binding to its mRNA. The polypeptide is Large ribosomal subunit protein uL1 (Sodalis glossinidius (strain morsitans)).